We begin with the raw amino-acid sequence, 1205 residues long: MGNLKSVGQEPGPPCGLGLGLGLGLCGKQGPATPAPEPSRAPAPATPHAPEHSPAPNSPTLTRPPEGPKFPRVKNWEVGSITYDTLCAQSQQDGPCTPRRCLGSLVLPRKLQSRPSPGPPPAEQLLSQARDFINQYYSSIKRSGSQAHEERLQEVEAEVATTGTYHLGESELVFGAKQAWRNAPRCVGRIQWGKLQVFDARDCSSAQEMFTYICNHIKYATNRGNLRSAITVFPQRTPGRGDFRIWNSQLVRYAGYRQQDGSVRGDPANVEITELCIQHGWTPGNGRFDVLPLLLQAPDEPPELFALPPELVLEVPLEHPTLEWFAALGLRWYALPAVSNMLLEIGGLEFPAAPFSGWYMSTEIGTRNLCDPHRYNILEDVAVCMDLDTRTTSSLWKDKAAVEINLAVLHSYQLAKVTIVDHHAATASFMKHLENEQKARGGCPADWAWIVPPISGSLTPVFHQEMVNYVLSPAFRYQPDPWKGSAAKGTGIARKKTFKEVANAVKISASLMATVMPKRVKASILYASETVRAQSYAQQLGRLFRKAFDPRVLCMDEYDVVSLEHETLVLVVTSTFGNGDPPENGESFAAALMEMSGPYNGSPRPEQHRSYKIRFNSVSCSDPLVSSWRRKRKESSNTDSAGALGTLRFCVFGLGSRAYPHFCAFARAVDTRLEELGGERLLQLGQGDELCGQEEAFRGWAQAAFQASCETFCVGEDAKAAARDIFSPKRSWKRQRYRLSAQVEGLQLLPGLVHVHRRKMFQATVLSVENLQSSKSTRATILVRLDTEGQEGLQYQPGDHIGICPPNRTGLVEALLSRVEDPTPPTESVGVEQLEKGSPGGPPPSWVRDPRLPPYTLRQALTFFLDITSPPSPRLLRVLSTLAEEPSEQQELETLSQDPRRYEEWKWFRCPTLLEVLEQFPSVALPTPLLLTQLALLQPRYYSVSSAPSTYPGEIHPTVAVLAYRTQDGLGPLHYGVCSTWLGQLKPGDPVPCFIRAAPSFRLPPDPSLPCILVGPGTGIAPFRGFWQERLHDIESKGLQPAPMTLVFGCRCSQLDHLYRDEVQDAQQRGVFGRVLTAFSREPDSPKTYVQDILRTELAAEVHRVLCLERGHMFVCGDVTMATSVLQTVQRILATEGNMELDEAGDVIGVLRDQQRYHEDIFGLTLRTQEVTSRIRTQSFSLQERHLRGAVPWTFDPPGPDTPGP.

A disordered region spans residues 1–73; sequence MGNLKSVGQE…PPEGPKFPRV (73 aa). Gly-2 is lipidated: N-myristoyl glycine. 2 S-palmitoyl cysteine lipidation sites follow: Cys-15 and Cys-26. Positions 15-27 are enriched in gly residues; that stretch reads CGLGLGLGLGLCG. Residues 33 to 47 show a composition bias toward pro residues; it reads TPAPEPSRAPAPATP. Zn(2+)-binding residues include Cys-96 and Cys-101. Residues 100 to 488 are interaction with NOSIP; sequence RCLGSLVLPR…PDPWKGSAAK (389 aa). Residue Ser-104 coordinates (6R)-L-erythro-5,6,7,8-tetrahydrobiopterin. Ser-116 is subject to Phosphoserine; by CDK5. Cys-186 is a heme b binding site. Gln-249, Trp-358, Tyr-359, Glu-363, and Asn-368 together coordinate L-arginine. Residues Ala-448, Trp-449, and Phe-462 each coordinate (6R)-L-erythro-5,6,7,8-tetrahydrobiopterin. Tyr-477 is a heme b binding site. The calmodulin-binding stretch occupies residues 492-512; the sequence is IARKKTFKEVANAVKISASLM. Thr-497 is subject to Phosphothreonine; by AMPK. The region spanning 522–705 is the Flavodoxin-like domain; it reads ASILYASETV…AFRGWAQAAF (184 aa). 6 residues coordinate FMN: Ser-528, Glu-529, Thr-530, Arg-532, Ser-574, and Thr-575. 3 positions are modified to phosphoserine: Ser-617, Ser-635, and Ser-640. Ser-656, Cys-663, Glu-689, and Gln-693 together coordinate FMN. Residues 758–1004 form the FAD-binding FR-type domain; that stretch reads RKMFQATVLS…IRAAPSFRLP (247 aa). Arg-778 is an NADP(+) binding site. Position 800 (His-800) interacts with FAD. Residues 820–848 form a disordered region; the sequence is EDPTPPTESVGVEQLEKGSPGGPPPSWVR. Phosphoserine is present on Ser-838. Residues Arg-940, Tyr-942, Ser-943, Thr-958, Ala-960, Tyr-964, Val-977, Cys-978, and Ser-979 each coordinate FAD. NADP(+)-binding residues include Thr-1018, Arg-1051, Ser-1080, Arg-1081, Lys-1087, Tyr-1089, and Gln-1091. At Thr-1177 the chain carries Phosphothreonine. Position 1179 is a phosphoserine; by AMPK (Ser-1179). Ser-1181 carries the phosphoserine modification.

It belongs to the NOS family. As to quaternary structure, homodimer. Interacts with NOSIP and NOSTRIN. Interacts with HSP90AB1. Forms a complex with ASL, ASS1 and SLC7A1; the complex regulates cell-autonomous L-arginine synthesis and citrulline recycling while channeling extracellular L-arginine to nitric oxide synthesis pathway. Requires heme b as cofactor. FAD serves as cofactor. It depends on FMN as a cofactor. (6R)-L-erythro-5,6,7,8-tetrahydrobiopterin is required as a cofactor. In terms of processing, phosphorylation by AMPK at Ser-1179 in the presence of Ca(2+)-calmodulin (CaM) activates activity. In absence of Ca(2+)-calmodulin, AMPK also phosphorylates Thr-497, resulting in inhibition of activity. Phosphorylation of Ser-116 by CDK5 reduces activity.

Its subcellular location is the membrane. The protein localises to the caveola. It localises to the cytoplasm. The protein resides in the cytoskeleton. It is found in the golgi apparatus. Its subcellular location is the cell membrane. It carries out the reaction 2 L-arginine + 3 NADPH + 4 O2 + H(+) = 2 L-citrulline + 2 nitric oxide + 3 NADP(+) + 4 H2O. Its activity is regulated as follows. Stimulated by calcium/calmodulin. Inhibited by NOSIP and NOSTRIN. Functionally, produces nitric oxide (NO) which is implicated in vascular smooth muscle relaxation through a cGMP-mediated signal transduction pathway. NO mediates vascular endothelial growth factor (VEGF)-induced angiogenesis in coronary vessels and promotes blood clotting through the activation of platelets. In Sus scrofa (Pig), this protein is Nitric oxide synthase 3 (NOS3).